Here is a 110-residue protein sequence, read N- to C-terminus: PHD finger-like domain-containing protein 5B (110 aa).

This sequence belongs to the PHF5 family.

The chain is PHD finger-like domain-containing protein 5B from Arabidopsis thaliana (Mouse-ear cress).